We begin with the raw amino-acid sequence, 313 residues long: Dehydrodolichyl diphosphate synthase CPT5, chloroplastic (313 aa).

A chloroplast-targeting transit peptide spans 1–42; that stretch reads MAFSFQLQQVFPFPVKFCSQPKSIKLQIFPNLTKRLPIHPLA. Aspartate 89 is an active-site residue.

The protein belongs to the UPP synthase family. The cofactor is Mg(2+). Expressed in leaf trichomes, stem trichomes and old leaves. Expressed at low levels in young leaves and flowers.

The protein localises to the plastid. It localises to the chloroplast. It catalyses the reaction n isopentenyl diphosphate + (2E,6E)-farnesyl diphosphate = a di-trans,poly-cis-polyprenyl diphosphate + n diphosphate. Catalyzes cis-prenyl chain elongation to produce the polyprenyl backbone of dolichol, a glycosyl carrier-lipid required for the biosynthesis of several classes of glycoprotein. This is Dehydrodolichyl diphosphate synthase CPT5, chloroplastic from Solanum lycopersicum (Tomato).